The following is a 209-amino-acid chain: Kynurenine formamidase (209 aa).

Residue tryptophan 20 participates in substrate binding. The Zn(2+) site is built by histidine 50, histidine 54, and aspartate 56. Catalysis depends on histidine 60, which acts as the Proton donor/acceptor. Histidine 161 and glutamate 173 together coordinate Zn(2+).

Belongs to the Cyclase 1 superfamily. KynB family. As to quaternary structure, homodimer. Requires Zn(2+) as cofactor.

It catalyses the reaction N-formyl-L-kynurenine + H2O = L-kynurenine + formate + H(+). It participates in amino-acid degradation; L-tryptophan degradation via kynurenine pathway; L-kynurenine from L-tryptophan: step 2/2. Its function is as follows. Catalyzes the hydrolysis of N-formyl-L-kynurenine to L-kynurenine, the second step in the kynurenine pathway of tryptophan degradation. This chain is Kynurenine formamidase, found in Bacillus cereus (strain ATCC 14579 / DSM 31 / CCUG 7414 / JCM 2152 / NBRC 15305 / NCIMB 9373 / NCTC 2599 / NRRL B-3711).